Consider the following 302-residue polypeptide: Acetylglutamate kinase (302 aa).

Residues 55-56 (GG), Arg-77, and Asn-176 contribute to the substrate site.

Belongs to the acetylglutamate kinase family. ArgB subfamily.

The protein resides in the cytoplasm. The catalysed reaction is N-acetyl-L-glutamate + ATP = N-acetyl-L-glutamyl 5-phosphate + ADP. Its pathway is amino-acid biosynthesis; L-arginine biosynthesis; N(2)-acetyl-L-ornithine from L-glutamate: step 2/4. In terms of biological role, catalyzes the ATP-dependent phosphorylation of N-acetyl-L-glutamate. This chain is Acetylglutamate kinase, found in Corynebacterium efficiens (strain DSM 44549 / YS-314 / AJ 12310 / JCM 11189 / NBRC 100395).